A 194-amino-acid chain; its full sequence is MRPYFTLLLALAFILACTNLVEADAGRVLETTTNEHARHLRTAVASVVDLPDDEDERLLGYNTVQLWRMRRTANKLMNGKLTTQKEAALKKWMASQQDKFLAKWLKSSSVYPDQVYSKLGLTKLGASAKSSPNYQLYEKYTEALLQRWTNFKASPDTVYKSLRLDKLGAKAPQSPSYPMYEKYLQTFFRNQPAN.

Residues 1-23 form the signal peptide; sequence MRPYFTLLLALAFILACTNLVEA. The short motif at 38–57 is the RxLR-dEER element; it reads RHLRTAVASVVDLPDDEDER. A host plasma membrane-binding region spans residues 58–108; it reads LLGYNTVQLWRMRRTANKLMNGKLTTQKEAALKKWMASQQDKFLAKWLKSS.

Belongs to the RxLR effector family. Homodimer. Interacts with host soybean aspartic protease AP1.

The protein resides in the secreted. The protein localises to the host cell membrane. Functionally, effector that suppresses plant defense responses during the early stages of pathogen infection. Suppresses cell death induced by effectors and PAMPs in plant hosts. Avh240 dimerizes and localizes at the plasma membrane to interfere with aspartic protease AP1 secretion, which presents an effective mechanism by which effector proteins suppress plant apoplastic immunity. This is RxLR effector protein Avh240 from Phytophthora sojae (Soybean stem and root rot agent).